The primary structure comprises 203 residues: Thymidine kinase (203 aa).

Residues 9–16 and 87–90 each bind ATP; these read ATMNAGKT and DEAQ. The active-site Proton acceptor is the Glu88. 4 residues coordinate Zn(2+): Cys145, Cys147, Cys181, and His184.

The protein belongs to the thymidine kinase family. In terms of assembly, homotetramer.

The protein localises to the cytoplasm. The enzyme catalyses thymidine + ATP = dTMP + ADP + H(+). The chain is Thymidine kinase from Mesorhizobium japonicum (strain LMG 29417 / CECT 9101 / MAFF 303099) (Mesorhizobium loti (strain MAFF 303099)).